Here is a 397-residue protein sequence, read N- to C-terminus: MSASFSPHTITLIKSTVPLLAEHGTTIIEAMYHRLFEDPQIEALFNQANQKNGTQIHALAGAILAYARNIDNPGVLASAIERISQKHVGYAIHPEHYPHVATALLGAIKQVLGDVATSEVLEAWGEAYWFIANLLKDREAVIREGIMTKNGGWIHWRRFVISKRIPESETITSFMLHPEDGGPVVPHQAGQYLTFRFDAAGMPGMKRNYSISCGPNSDHYRITVKREHGTGASAFLHDQAKVGTIIECTPPVGDFFLPSVIERPIVLLSGGVGLTPMVSMMEQIAEAYPDAQVWYVHGTQNRETHAMDAHIRALVSRHKHMKATTFYTQRSEADDAEAGFITIDWLRANTPFQKADFYLCGPRPFLRTFVRDLIGAGVPAAQVHYEFFGPMDEEMAA.

A Globin domain is found at 4–140 (SFSPHTITLI…IANLLKDREA (137 aa)). Residue His87 coordinates heme b. Residues Tyr97 and Glu139 each act as charge relay system in the active site. Residues 151-397 (GGWIHWRRFV…FGPMDEEMAA (247 aa)) are reductase. Positions 154 to 258 (IHWRRFVISK…TPPVGDFFLP (105 aa)) constitute an FAD-binding FR-type domain. FAD is bound by residues Tyr192 and 207–210 (RNYS). 271–276 (GVGLTP) lines the NADP(+) pocket. 387 to 390 (FFGP) provides a ligand contact to FAD.

Belongs to the globin family. Two-domain flavohemoproteins subfamily. It in the C-terminal section; belongs to the flavoprotein pyridine nucleotide cytochrome reductase family. Requires heme b as cofactor. FAD serves as cofactor.

It carries out the reaction 2 nitric oxide + NADPH + 2 O2 = 2 nitrate + NADP(+) + H(+). The catalysed reaction is 2 nitric oxide + NADH + 2 O2 = 2 nitrate + NAD(+) + H(+). Its function is as follows. Is involved in NO detoxification in an aerobic process, termed nitric oxide dioxygenase (NOD) reaction that utilizes O(2) and NAD(P)H to convert NO to nitrate, which protects the bacterium from various noxious nitrogen compounds. Therefore, plays a central role in the inducible response to nitrosative stress. The chain is Flavohemoprotein from Xylella fastidiosa (strain Temecula1 / ATCC 700964).